The chain runs to 197 residues: Glycerol-3-phosphate acyltransferase (197 aa).

5 helical membrane-spanning segments follow: residues 2-22 (LDVI…AIVV), 53-73 (AGIT…LAWL), 78-98 (PVVA…PVYF), 112-132 (VILA…LAVA), and 152-174 (YMLW…AAIV).

This sequence belongs to the PlsY family. As to quaternary structure, probably interacts with PlsX.

The protein resides in the cell inner membrane. The enzyme catalyses an acyl phosphate + sn-glycerol 3-phosphate = a 1-acyl-sn-glycero-3-phosphate + phosphate. It participates in lipid metabolism; phospholipid metabolism. Catalyzes the transfer of an acyl group from acyl-phosphate (acyl-PO(4)) to glycerol-3-phosphate (G3P) to form lysophosphatidic acid (LPA). This enzyme utilizes acyl-phosphate as fatty acyl donor, but not acyl-CoA or acyl-ACP. This chain is Glycerol-3-phosphate acyltransferase, found in Halorhodospira halophila (strain DSM 244 / SL1) (Ectothiorhodospira halophila (strain DSM 244 / SL1)).